A 340-amino-acid polypeptide reads, in one-letter code: UDP-3-O-acylglucosamine N-acyltransferase (340 aa).

The active-site Proton acceptor is the His238.

It belongs to the transferase hexapeptide repeat family. LpxD subfamily. Homotrimer.

The enzyme catalyses a UDP-3-O-[(3R)-3-hydroxyacyl]-alpha-D-glucosamine + a (3R)-hydroxyacyl-[ACP] = a UDP-2-N,3-O-bis[(3R)-3-hydroxyacyl]-alpha-D-glucosamine + holo-[ACP] + H(+). The protein operates within bacterial outer membrane biogenesis; LPS lipid A biosynthesis. Functionally, catalyzes the N-acylation of UDP-3-O-acylglucosamine using 3-hydroxyacyl-ACP as the acyl donor. Is involved in the biosynthesis of lipid A, a phosphorylated glycolipid that anchors the lipopolysaccharide to the outer membrane of the cell. The protein is UDP-3-O-acylglucosamine N-acyltransferase of Shewanella denitrificans (strain OS217 / ATCC BAA-1090 / DSM 15013).